Here is a 160-residue protein sequence, read N- to C-terminus: Cyclic pyranopterin monophosphate synthase (160 aa).

Residues 73–75 (LCH) and 110–111 (ME) contribute to the substrate site. Asp125 is a catalytic residue.

This sequence belongs to the MoaC family. As to quaternary structure, homohexamer; trimer of dimers.

It carries out the reaction (8S)-3',8-cyclo-7,8-dihydroguanosine 5'-triphosphate = cyclic pyranopterin phosphate + diphosphate. It participates in cofactor biosynthesis; molybdopterin biosynthesis. Its function is as follows. Catalyzes the conversion of (8S)-3',8-cyclo-7,8-dihydroguanosine 5'-triphosphate to cyclic pyranopterin monophosphate (cPMP). This is Cyclic pyranopterin monophosphate synthase from Pseudomonas paraeruginosa (strain DSM 24068 / PA7) (Pseudomonas aeruginosa (strain PA7)).